Here is a 332-residue protein sequence, read N- to C-terminus: Ribosomal RNA small subunit methyltransferase H (332 aa).

S-adenosyl-L-methionine-binding positions include 42–44 (GGH), Asp62, Phe86, Asp105, and Gln112.

This sequence belongs to the methyltransferase superfamily. RsmH family.

Its subcellular location is the cytoplasm. It catalyses the reaction cytidine(1402) in 16S rRNA + S-adenosyl-L-methionine = N(4)-methylcytidine(1402) in 16S rRNA + S-adenosyl-L-homocysteine + H(+). Functionally, specifically methylates the N4 position of cytidine in position 1402 (C1402) of 16S rRNA. The polypeptide is Ribosomal RNA small subunit methyltransferase H (Cupriavidus pinatubonensis (strain JMP 134 / LMG 1197) (Cupriavidus necator (strain JMP 134))).